Reading from the N-terminus, the 618-residue chain is Dihydroxy-acid dehydratase (618 aa).

A Mg(2+)-binding site is contributed by Asp81. A [2Fe-2S] cluster-binding site is contributed by Cys122. Mg(2+)-binding residues include Asp123 and Lys124. An N6-carboxylysine modification is found at Lys124. A [2Fe-2S] cluster-binding site is contributed by Cys199. Glu495 is a Mg(2+) binding site. The Proton acceptor role is filled by Ser521.

Belongs to the IlvD/Edd family. As to quaternary structure, homodimer. Requires [2Fe-2S] cluster as cofactor. The cofactor is Mg(2+).

It carries out the reaction (2R)-2,3-dihydroxy-3-methylbutanoate = 3-methyl-2-oxobutanoate + H2O. It catalyses the reaction (2R,3R)-2,3-dihydroxy-3-methylpentanoate = (S)-3-methyl-2-oxopentanoate + H2O. It participates in amino-acid biosynthesis; L-isoleucine biosynthesis; L-isoleucine from 2-oxobutanoate: step 3/4. It functions in the pathway amino-acid biosynthesis; L-valine biosynthesis; L-valine from pyruvate: step 3/4. Its function is as follows. Functions in the biosynthesis of branched-chain amino acids. Catalyzes the dehydration of (2R,3R)-2,3-dihydroxy-3-methylpentanoate (2,3-dihydroxy-3-methylvalerate) into 2-oxo-3-methylpentanoate (2-oxo-3-methylvalerate) and of (2R)-2,3-dihydroxy-3-methylbutanoate (2,3-dihydroxyisovalerate) into 2-oxo-3-methylbutanoate (2-oxoisovalerate), the penultimate precursor to L-isoleucine and L-valine, respectively. This Blochmanniella floridana protein is Dihydroxy-acid dehydratase.